Consider the following 299-residue polypeptide: Peroxisomal biogenesis factor 19 (299 aa).

Residue Ala2 is modified to N-acetylalanine. Residues 2 to 56 form a docking to the peroxisome membrane and binding to PEX3 region; it reads AAAEGGCGAGVEADRELEELLESALDDFDKAKPSPAPSPTISAPDASGPQKRSPG. The interval 2–91 is necessary for PEX19 function on peroxisome biogenesis; sequence AAAEGGCGAG…QATAEFEKAM (90 aa). The segment at 25–63 is disordered; the sequence is ALDDFDKAKPSPAPSPTISAPDASGPQKRSPGDTAKDAL. A phosphoserine mark is found at Ser35, Ser39, Ser54, and Ser66. Thr236 is modified (phosphothreonine). Cys296 bears the Cysteine methyl ester mark. Residue Cys296 is the site of S-farnesyl cysteine attachment. Residues 297 to 299 constitute a propeptide, removed in mature form; the sequence is LIM.

It belongs to the peroxin-19 family. As to quaternary structure, interacts with a broad range of peroxisomal membrane proteins, including PEX3, PEX10, PEX11A, PEX11B, PEX12, PEX13, PEX14 and PEX16, PXMP2/PMP22, PXMP4/PMP24, SLC25A17/PMP34, ABCD1/ALDP, ABCD2/ALDRP, and ABCD3/PMP70. Also interacts with the tumor suppressor CDKN2A/p19ARF.

It localises to the cytoplasm. The protein resides in the peroxisome membrane. Functionally, necessary for early peroxisomal biogenesis. Acts both as a cytosolic chaperone and as an import receptor for peroxisomal membrane proteins (PMPs). Binds and stabilizes newly synthesized PMPs in the cytoplasm by interacting with their hydrophobic membrane-spanning domains, and targets them to the peroxisome membrane by binding to the integral membrane protein PEX3. Excludes CDKN2A from the nucleus and prevents its interaction with MDM2, which results in active degradation of TP53. This Rattus norvegicus (Rat) protein is Peroxisomal biogenesis factor 19 (Pex19).